A 501-amino-acid chain; its full sequence is L-lysine transport protein (501 aa).

Helical transmembrane passes span 25–41 (LIALIIGSTVGAGIFSI), 52–76 (GAMLIGWLIAGVGMLSVAFVFHVLA), 92–113 (VGLGDYVGFSSAWGYWLGSVIA), 138–155 (FVSALAVSALTWLVFGVV), 174–191 (ILPLLCFIILVAFLGFSW), 214–232 (GIMVYTVWVFIGIEGASVY), 247–269 (VIGFVAVLLLLVSISSLSFGVLT), 292–316 (WGAALISLGLCLSVLGAYVSWQMLC), 340–362 (GAAWMAQLISTIVIQIFIIIFFL), 377–393 (LYLVPYLFSAFYLVMLA), 424–440 (LIVGLVATVYSVWLFYA), 447–463 (LFGAMAMLPGLIPYVWT), and 477–495 (IGVVVVLVVAASAGVIGLV).

It belongs to the amino acid-polyamine-organocation (APC) superfamily. Basic amino acid/polyamine antiporter (APA) (TC 2.A.3.2) family.

It localises to the cell membrane. Permease that is involved in the transport across the membrane of lysine. In Corynebacterium glutamicum (strain ATCC 13032 / DSM 20300 / JCM 1318 / BCRC 11384 / CCUG 27702 / LMG 3730 / NBRC 12168 / NCIMB 10025 / NRRL B-2784 / 534), this protein is L-lysine transport protein (lysI).